The chain runs to 320 residues: Acetaldehyde dehydrogenase 2 (320 aa).

The Acyl-thioester intermediate role is filled by Cys129. Residues 160 to 168 (SAGPGTRAN) and Asn287 each bind NAD(+).

The protein belongs to the acetaldehyde dehydrogenase family.

The catalysed reaction is acetaldehyde + NAD(+) + CoA = acetyl-CoA + NADH + H(+). The chain is Acetaldehyde dehydrogenase 2 from Burkholderia cenocepacia (strain ATCC BAA-245 / DSM 16553 / LMG 16656 / NCTC 13227 / J2315 / CF5610) (Burkholderia cepacia (strain J2315)).